The chain runs to 364 residues: Protein-glutamate methylesterase/protein-glutamine glutaminase (364 aa).

Positions 7–124 (RALIVDDSAL…SQNMPDMAEE (118 aa)) constitute a Response regulatory domain. 4-aspartylphosphate is present on Asp58. Residues 167–364 (ETTSFVRNVL…MAEEIVKIIS (198 aa)) form the CheB-type methylesterase domain. Active-site residues include Ser181, His208, and Asp308.

Belongs to the CheB family. Post-translationally, phosphorylated by CheA. Phosphorylation of the N-terminal regulatory domain activates the methylesterase activity.

Its subcellular location is the cytoplasm. The enzyme catalyses [protein]-L-glutamate 5-O-methyl ester + H2O = L-glutamyl-[protein] + methanol + H(+). The catalysed reaction is L-glutaminyl-[protein] + H2O = L-glutamyl-[protein] + NH4(+). In terms of biological role, involved in chemotaxis. Part of a chemotaxis signal transduction system that modulates chemotaxis in response to various stimuli. Catalyzes the demethylation of specific methylglutamate residues introduced into the chemoreceptors (methyl-accepting chemotaxis proteins or MCP) by CheR. Also mediates the irreversible deamidation of specific glutamine residues to glutamic acid. This chain is Protein-glutamate methylesterase/protein-glutamine glutaminase, found in Methanosarcina barkeri (strain Fusaro / DSM 804).